A 346-amino-acid chain; its full sequence is Ornithine carbamoyltransferase, catabolic (346 aa).

Carbamoyl phosphate contacts are provided by residues 58–61 (STRT), Asn-85, Arg-109, and 136–139 (HPTQ). Residues Asn-168, Asp-239, and 243-244 (SL) each bind L-ornithine. Residues 280–281 (CL) and Arg-332 each bind carbamoyl phosphate.

Belongs to the aspartate/ornithine carbamoyltransferase superfamily. OTCase family.

It localises to the cytoplasm. The catalysed reaction is carbamoyl phosphate + L-ornithine = L-citrulline + phosphate + H(+). It participates in amino-acid degradation; L-arginine degradation via ADI pathway; carbamoyl phosphate from L-arginine: step 2/2. In terms of biological role, reversibly catalyzes the transfer of the carbamoyl group from carbamoyl phosphate (CP) to the N(epsilon) atom of ornithine (ORN) to produce L-citrulline. The protein is Ornithine carbamoyltransferase, catabolic of Mycoplasma pneumoniae (strain ATCC 29342 / M129 / Subtype 1) (Mycoplasmoides pneumoniae).